A 428-amino-acid chain; its full sequence is Probable mitochondrial adenine nucleotide transporter BTL3 (428 aa).

3 Solcar repeats span residues 129-212, 222-307, and 336-421; these read LNTT…YRGQ, TTNF…LKSA, and LGPM…MKVV. Helical transmembrane passes span 132-152, 187-207, 228-248, 283-303, 342-362, and 390-410; these read TKHLWAGAFAAMVSRTCIAPL, GNLVNILRTAPFKSINFYAYD, FVAGAAAGVTASLLCLPLDTI, LVPSLVSMAPSGAVFYGVYDI, LLYGAIAGACSEAATYPFEVV, and VPALYAGLIPSLLQVLPSAAI.

Belongs to the mitochondrial carrier (TC 2.A.29) family.

The protein resides in the mitochondrion inner membrane. In terms of biological role, probable mitochondrial adenylate carrier that catalyzes the transport of ATP, ADP and AMP. This Arabidopsis thaliana (Mouse-ear cress) protein is Probable mitochondrial adenine nucleotide transporter BTL3.